Reading from the N-terminus, the 478-residue chain is Abscisate beta-glucosyltransferase (478 aa).

Catalysis depends on H20, which acts as the Proton acceptor. H20 is a binding site for an anthocyanidin. Residue D108 is the Charge relay of the active site. Residues A340, Q342, H357, W360, N361, S362, and E365 each contribute to the UDP-alpha-D-glucose site. A380 provides a ligand contact to an anthocyanidin. Positions 381 and 382 each coordinate UDP-alpha-D-glucose.

This sequence belongs to the UDP-glycosyltransferase family.

It catalyses the reaction 2-cis-(+)-abscisate + UDP-alpha-D-glucose = beta-D-glucopyranosyl cis-(+)-abscisate + UDP. Glucosyltransferase involved in the catabolism of abscisic acid (ABA). Adds a glucosyl group at the C-1 position of ABA; (S)-2-trans-abscisate is a better substrate than the natural (+)-S-abscisate or its enantiomer (-)-R-abscisate. No activity with (-)-phaseic acid (PA), methylated-ABA or with other hormones such as jasmonate, zeatin, auxin (IAA) or gibberellin A3 (GA3). This is Abscisate beta-glucosyltransferase (AOG) from Phaseolus angularis (Azuki bean).